The chain runs to 235 residues: Segregation and condensation protein A (235 aa).

The protein belongs to the ScpA family. In terms of assembly, component of a cohesin-like complex composed of ScpA, ScpB and the Smc homodimer, in which ScpA and ScpB bind to the head domain of Smc. The presence of the three proteins is required for the association of the complex with DNA.

It is found in the cytoplasm. Participates in chromosomal partition during cell division. May act via the formation of a condensin-like complex containing Smc and ScpB that pull DNA away from mid-cell into both cell halves. The polypeptide is Segregation and condensation protein A (Streptococcus equi subsp. equi (strain 4047)).